The primary structure comprises 364 residues: Fructose-bisphosphate aldolase C (364 aa).

Phosphotyrosine is present on Tyr-5. Phosphoserine is present on residues Ser-36, Ser-39, and Ser-45. Arg-56 contacts substrate. Lys-111 carries the N6-acetyllysine modification. Ser-132 is subject to Phosphoserine. Residue Lys-147 participates in substrate binding. Catalysis depends on Glu-188, which acts as the Proton acceptor. Lys-230 functions as the Schiff-base intermediate with dihydroxyacetone-P in the catalytic mechanism.

Belongs to the class I fructose-bisphosphate aldolase family. As to quaternary structure, homotetramer. Interacts with ATP6V1E1.

It carries out the reaction beta-D-fructose 1,6-bisphosphate = D-glyceraldehyde 3-phosphate + dihydroxyacetone phosphate. It functions in the pathway carbohydrate degradation; glycolysis; D-glyceraldehyde 3-phosphate and glycerone phosphate from D-glucose: step 4/4. This Macaca fascicularis (Crab-eating macaque) protein is Fructose-bisphosphate aldolase C (ALDOC).